The chain runs to 615 residues: Medium-chain acyl-CoA ligase ACSF2, mitochondrial (615 aa).

A mitochondrion-targeting transit peptide spans 1–41; it reads MAVYHGMLRFGRLCIASLGARGPRTLLSRPRPNSKLQSVRA. Lysine 179 carries the post-translational modification N6-acetyllysine. The residue at position 182 (lysine 182) is an N6-acetyllysine; alternate. Lysine 182 carries the post-translational modification N6-succinyllysine; alternate. Position 199 is an N6-acetyllysine (lysine 199). 263 to 271 provides a ligand contact to ATP; that stretch reads TSGTTGNPK. Residues lysine 340 and lysine 398 each carry the N6-acetyllysine modification. Lysine 478 is modified (N6-succinyllysine). Aspartate 493 and arginine 508 together coordinate ATP. Lysine 510 carries the post-translational modification N6-acetyllysine. 2 positions are modified to N6-acetyllysine; alternate: lysine 544 and lysine 570. N6-succinyllysine; alternate is present on residues lysine 544 and lysine 570. Position 599 (lysine 599) interacts with ATP. Lysine 599 is modified (N6-succinyllysine).

This sequence belongs to the ATP-dependent AMP-binding enzyme family.

It localises to the mitochondrion. The catalysed reaction is a medium-chain fatty acid + ATP + CoA = a medium-chain fatty acyl-CoA + AMP + diphosphate. The enzyme catalyses octanoate + ATP + CoA = octanoyl-CoA + AMP + diphosphate. In terms of biological role, acyl-CoA synthases catalyze the initial reaction in fatty acid metabolism, by forming a thioester with CoA. Has some preference toward medium-chain substrates. Plays a role in adipocyte differentiation. The chain is Medium-chain acyl-CoA ligase ACSF2, mitochondrial from Mus musculus (Mouse).